We begin with the raw amino-acid sequence, 451 residues long: Probable phosphoglucosamine mutase (451 aa).

Serine 96 acts as the Phosphoserine intermediate in catalysis. The Mg(2+) site is built by serine 96, aspartate 233, aspartate 235, and aspartate 237. Serine 96 carries the post-translational modification Phosphoserine.

The protein belongs to the phosphohexose mutase family. Requires Mg(2+) as cofactor. Post-translationally, activated by phosphorylation.

The enzyme catalyses alpha-D-glucosamine 1-phosphate = D-glucosamine 6-phosphate. Its function is as follows. Catalyzes the conversion of glucosamine-6-phosphate to glucosamine-1-phosphate. The polypeptide is Probable phosphoglucosamine mutase (Pyrococcus abyssi (strain GE5 / Orsay)).